Reading from the N-terminus, the 645-residue chain is Cytochrome c oxidase subunit 1 (645 aa).

Residues 8 to 28 form a helical membrane-spanning segment; sequence LNYFYFSMWTGLSGAALATMI. Glu31 and Gly36 together coordinate Ca(2+). His54 lines the Fe(II)-heme a pocket. Helical transmembrane passes span 56–76, 90–110, 247–267, 282–302, 337–357, 376–396, 410–430, and 438–458; these read LIMV…NFLI, LNSI…KIAF, VLSV…LTLI, VLIP…AIVT, LFWF…FGVA, IWAV…HMYL, ITIM…LTLA, and LVFL…FTGM. His343 contacts Cu cation. A cross-link (1'-histidyl-3'-tyrosine (His-Tyr)) is located at residues 343 to 347; it reads HPEVY. Tyr347 contributes to the O2 binding site. Cu cation is bound by residues His392 and His393. Mg(2+)-binding residues include His470 and Asp471. Transmembrane regions (helical) follow at residues 475-495, 513-533, and 555-575; these read VVAH…FTGL, FLHL…MFFL, and LASC…FGIF. His478 contacts heme a3. Fe(II)-heme a is bound at residue His480.

The protein belongs to the heme-copper respiratory oxidase family. As to quaternary structure, component of the cytochrome c oxidase (complex IV, CIV), a multisubunit enzyme composed of a catalytic core of 3 subunits and several supernumerary subunits. The complex exists as a monomer or a dimer and forms supercomplexes (SCs) in the inner mitochondrial membrane with ubiquinol-cytochrome c oxidoreductase (cytochrome b-c1 complex, complex III, CIII). Heme serves as cofactor. The cofactor is Cu cation.

It is found in the mitochondrion inner membrane. It catalyses the reaction 4 Fe(II)-[cytochrome c] + O2 + 8 H(+)(in) = 4 Fe(III)-[cytochrome c] + 2 H2O + 4 H(+)(out). It functions in the pathway energy metabolism; oxidative phosphorylation. Functionally, component of the cytochrome c oxidase, the last enzyme in the mitochondrial electron transport chain which drives oxidative phosphorylation. The respiratory chain contains 3 multisubunit complexes succinate dehydrogenase (complex II, CII), ubiquinol-cytochrome c oxidoreductase (cytochrome b-c1 complex, complex III, CIII) and cytochrome c oxidase (complex IV, CIV), that cooperate to transfer electrons derived from NADH and succinate to molecular oxygen, creating an electrochemical gradient over the inner membrane that drives transmembrane transport and the ATP synthase. Cytochrome c oxidase is the component of the respiratory chain that catalyzes the reduction of oxygen to water. Electrons originating from reduced cytochrome c in the intermembrane space (IMS) are transferred via the dinuclear copper A center (CU(A)) of subunit 2 and heme A of subunit 1 to the active site in subunit 1, a binuclear center (BNC) formed by heme A3 and copper B (CU(B)). The BNC reduces molecular oxygen to 2 water molecules using 4 electrons from cytochrome c in the IMS and 4 protons from the mitochondrial matrix. This Paramecium tetraurelia protein is Cytochrome c oxidase subunit 1 (COI).